Here is a 475-residue protein sequence, read N- to C-terminus: Ribulose bisphosphate carboxylase large chain (475 aa).

Positions 1-2 are excised as a propeptide; sequence MS. The residue at position 3 (P3) is an N-acetylproline. Position 14 is an N6,N6,N6-trimethyllysine (K14). Substrate contacts are provided by N123 and T173. Catalysis depends on K175, which acts as the Proton acceptor. K177 provides a ligand contact to substrate. 3 residues coordinate Mg(2+): K201, D203, and E204. An N6-carboxylysine modification is found at K201. The active-site Proton acceptor is H294. Residues R295, H327, and S379 each coordinate substrate.

Belongs to the RuBisCO large chain family. Type I subfamily. In terms of assembly, heterohexadecamer of 8 large chains and 8 small chains; disulfide-linked. The disulfide link is formed within the large subunit homodimers. The cofactor is Mg(2+). The disulfide bond which can form in the large chain dimeric partners within the hexadecamer appears to be associated with oxidative stress and protein turnover.

It is found in the plastid. The protein resides in the chloroplast. It carries out the reaction 2 (2R)-3-phosphoglycerate + 2 H(+) = D-ribulose 1,5-bisphosphate + CO2 + H2O. The enzyme catalyses D-ribulose 1,5-bisphosphate + O2 = 2-phosphoglycolate + (2R)-3-phosphoglycerate + 2 H(+). Functionally, ruBisCO catalyzes two reactions: the carboxylation of D-ribulose 1,5-bisphosphate, the primary event in carbon dioxide fixation, as well as the oxidative fragmentation of the pentose substrate in the photorespiration process. Both reactions occur simultaneously and in competition at the same active site. In Glycine max (Soybean), this protein is Ribulose bisphosphate carboxylase large chain (rbcL).